Consider the following 234-residue polypeptide: Small ribosomal subunit protein eS4 (234 aa).

One can recognise an S4 RNA-binding; degenerate domain in the interval 38–99 (IPLLIALRDY…GNDYLVSYDR (62 aa)).

It belongs to the eukaryotic ribosomal protein eS4 family.

The protein is Small ribosomal subunit protein eS4 (rps4e) of Picrophilus torridus (strain ATCC 700027 / DSM 9790 / JCM 10055 / NBRC 100828 / KAW 2/3).